The following is a 162-amino-acid chain: D-aminoacyl-tRNA deacylase (162 aa).

A Gly-cisPro motif, important for rejection of L-amino acids motif is present at residues 145-146; it reads GP.

It belongs to the DTD family. Homodimer.

It localises to the cytoplasm. The enzyme catalyses glycyl-tRNA(Ala) + H2O = tRNA(Ala) + glycine + H(+). It carries out the reaction a D-aminoacyl-tRNA + H2O = a tRNA + a D-alpha-amino acid + H(+). Functionally, an aminoacyl-tRNA editing enzyme that deacylates mischarged D-aminoacyl-tRNAs. Also deacylates mischarged glycyl-tRNA(Ala), protecting cells against glycine mischarging by AlaRS. Acts via tRNA-based rather than protein-based catalysis; rejects L-amino acids rather than detecting D-amino acids in the active site. By recycling D-aminoacyl-tRNA to D-amino acids and free tRNA molecules, this enzyme counteracts the toxicity associated with the formation of D-aminoacyl-tRNA entities in vivo and helps enforce protein L-homochirality. This Bifidobacterium longum subsp. infantis (strain ATCC 15697 / DSM 20088 / JCM 1222 / NCTC 11817 / S12) protein is D-aminoacyl-tRNA deacylase.